A 223-amino-acid chain; its full sequence is MSYVTDFYQAKLKLYSYWRSSCAHRVRIALTLKGLDYEYIPVNLLKGDQSDSDFKKINPMGTVPALVDGDVVINDSFAIIMYLDDKYPEPPLLPSDYHKRAVNYQATSIVMSGIQPHQNMALFRYLEDKINAEEKTAWITNAITKGFTALEKLLVSCAGKYATGDEVYLADLFLAPQIHAAFNRFHINMEPFPTLARFYESYNELPAFQNAVPEKQPDTPSTI.

A GST N-terminal domain is found at 10–91; it reads AKLKLYSYWR…YLDDKYPEPP (82 aa). Glutathione-binding positions include 20–21, 20–25, glutamine 49, 49–50, 62–63, valine 63, 75–76, glutamine 115, and 119–121; these read SS, SSCAHR, QS, TV, DS, and NMA. One can recognise a GST C-terminal domain in the interval 96–221; it reads DYHKRAVNYQ…VPEKQPDTPS (126 aa).

It belongs to the GST superfamily. Zeta family.

Its subcellular location is the cytoplasm. It localises to the cytosol. The catalysed reaction is RX + glutathione = an S-substituted glutathione + a halide anion + H(+). Functionally, may be involved in the conjugation of reduced glutathione to a wide number of exogenous and endogenous hydrophobic electrophiles and have a detoxification role against certain herbicides. The chain is Glutathione S-transferase Z2 (GSTZ2) from Arabidopsis thaliana (Mouse-ear cress).